The primary structure comprises 175 residues: NADH-quinone oxidoreductase subunit I 2 (175 aa).

2 4Fe-4S ferredoxin-type domains span residues 50-82 and 98-127; these read HVLQ…IEAA and KVYN…HGHG. [4Fe-4S] cluster is bound by residues cysteine 62, cysteine 65, cysteine 68, cysteine 72, cysteine 107, cysteine 110, cysteine 113, and cysteine 117.

It belongs to the complex I 23 kDa subunit family. NDH-1 is composed of 14 different subunits. Subunits NuoA, H, J, K, L, M, N constitute the membrane sector of the complex. [4Fe-4S] cluster serves as cofactor.

The protein localises to the cell inner membrane. The enzyme catalyses a quinone + NADH + 5 H(+)(in) = a quinol + NAD(+) + 4 H(+)(out). Functionally, NDH-1 shuttles electrons from NADH, via FMN and iron-sulfur (Fe-S) centers, to quinones in the respiratory chain. The immediate electron acceptor for the enzyme in this species is believed to be ubiquinone. Couples the redox reaction to proton translocation (for every two electrons transferred, four hydrogen ions are translocated across the cytoplasmic membrane), and thus conserves the redox energy in a proton gradient. The protein is NADH-quinone oxidoreductase subunit I 2 of Koribacter versatilis (strain Ellin345).